The chain runs to 233 residues: Large ribosomal subunit protein bL25 (233 aa).

The disordered stretch occupies residues M1–E23.

It belongs to the bacterial ribosomal protein bL25 family. CTC subfamily. In terms of assembly, part of the 50S ribosomal subunit; part of the 5S rRNA/L5/L18/L25 subcomplex. Contacts the 5S rRNA. Binds to the 5S rRNA independently of L5 and L18.

Functionally, this is one of the proteins that binds to the 5S RNA in the ribosome where it forms part of the central protuberance. The chain is Large ribosomal subunit protein bL25 from Nitrobacter hamburgensis (strain DSM 10229 / NCIMB 13809 / X14).